A 778-amino-acid chain; its full sequence is General transcription and DNA repair factor IIH helicase subunit XPD/RAD3 (778 aa).

In terms of domain architecture, Helicase ATP-binding spans Asp7 to Glu285. Position 42–49 (Met42–Thr49) interacts with ATP. Cys115, Cys133, Cys156, and Cys191 together coordinate [4Fe-4S] cluster. The short motif at Asp235 to His238 is the DEAH box element. A compositionally biased stretch (basic and acidic residues) spans Ser750–Gly765. The disordered stretch occupies residues Ser750–Gln778. Over residues Glu766–Gln778 the composition is skewed to acidic residues.

It belongs to the helicase family. RAD3/XPD subfamily. In terms of assembly, component of the 7-subunit TFIIH core complex composed of XPB/SSL2, XPD/RAD3, SSL1, TFB1, TFB2, TFB4 and TFB5, which is active in NER. The core complex associates with the 3-subunit CTD-kinase module TFIIK composed of CCL1, KIN28 and TFB3 to form the 10-subunit holoenzyme (holo-TFIIH) active in transcription. An additionnal subunit, TFB6, plays a role in the dissociation of the SSL2 helicase from TFIIH after transcription initiation. [4Fe-4S] cluster is required as a cofactor. It depends on Mg(2+) as a cofactor.

The protein localises to the nucleus. The catalysed reaction is Couples ATP hydrolysis with the unwinding of duplex DNA at the replication fork by translocating in the 5'-3' direction. This creates two antiparallel DNA single strands (ssDNA). The leading ssDNA polymer is the template for DNA polymerase III holoenzyme which synthesizes a continuous strand.. It catalyses the reaction ATP + H2O = ADP + phosphate + H(+). In terms of biological role, ATP-dependent 5'-3' DNA helicase. Component of the general transcription and DNA repair factor IIH (TFIIH) core complex, which is involved in general and transcription-coupled nucleotide excision repair (NER) of damaged DNA and, when complexed to TFIIK, in RNA transcription by RNA polymerase II. In NER, TFIIH acts by opening DNA around the lesion to allow the excision of the damaged oligonucleotide and its replacement by a new DNA fragment. The ATP-dependent helicase activity of XPD/RAD3 is required for DNA opening. In transcription, TFIIH has an essential role in transcription initiation. When the pre-initiation complex (PIC) has been established, TFIIH is required for promoter opening and promoter escape. Phosphorylation of the C-terminal tail (CTD) of the largest subunit of RNA polymerase II by the kinase module TFIIK controls the initiation of transcription. XPD/RAD3 acts by forming a bridge between TFIIK and the core-TFIIH complex. Involved in the maintenance of the fidelity of DNA replication. Has single-stranded DNA-dependent ATPase activity. 5'-3' DNA helicase activity requires ATP (dATP partially substitutes), will unwind over 800 bp dsDNA. Able to unwind an RNA:DNA hybrid. The polypeptide is General transcription and DNA repair factor IIH helicase subunit XPD/RAD3 (Saccharomyces cerevisiae (strain ATCC 204508 / S288c) (Baker's yeast)).